The primary structure comprises 35 residues: Mu-theraphotoxin-Pn3b (35 aa).

3 disulfides stabilise this stretch: Cys-2–Cys-16, Cys-9–Cys-21, and Cys-15–Cys-28.

The protein belongs to the neurotoxin 10 (Hwtx-1) family. 28 (Jztx-11) subfamily. Expressed by the venom gland.

The protein resides in the secreted. Gating-modifier toxin that targets voltage-gated sodium channels with a preferential activity on Nav1.7/SCN9A. On Nav1.7/SCN9A, the toxin acts by shifting the voltage-dependence of activation to more depolarized potentials, whereas it does not cause significant effect on the voltage-dependence of activation on other sodium channels. Minor effects are observed on the voltage-dependence of steady-state fast inactivation for all sodium channels tested (Nav1.1/SCN1A-Nav1.8/SCN10A). By testing the toxin on channel chimera, it has been shown to interact with the S3-S4 linkers in DII and DIV domains of Nav1.7/SCN9A. In vivo, the toxin dose-dependently reduces OD1-induced spontaneous pain behaviors. The polypeptide is Mu-theraphotoxin-Pn3b (Pamphobeteus nigricolor (Giant blue bloom tarantula)).